A 439-amino-acid chain; its full sequence is ATP-dependent RNA helicase RhlB (439 aa).

The Q motif signature appears at 9-37 (QKFADLPLHPEVKQALAENGFEFCTPIQA). Residues 40–219 (LPVLLQSKDI…YDHMNEPVKV (180 aa)) form the Helicase ATP-binding domain. 53-60 (AQTGTGKT) contacts ATP. A DEAD box motif is present at residues 165 to 168 (DEAD). The Helicase C-terminal domain occupies 243 to 390 (KMRLLLTLIE…VSNYDRDALL (148 aa)). Residues 395–439 (PPVKIHRRHPAGARNLRERSGAGRPQGAHRSGGRPPRHDRTRRQP) form a disordered region. A compositionally biased stretch (basic residues) spans 425 to 439 (SGGRPPRHDRTRRQP).

The protein belongs to the DEAD box helicase family. RhlB subfamily. Component of the RNA degradosome, which is a multiprotein complex involved in RNA processing and mRNA degradation.

The protein resides in the cytoplasm. It catalyses the reaction ATP + H2O = ADP + phosphate + H(+). Its function is as follows. DEAD-box RNA helicase involved in RNA degradation. Has RNA-dependent ATPase activity and unwinds double-stranded RNA. The sequence is that of ATP-dependent RNA helicase RhlB from Shewanella sp. (strain ANA-3).